Reading from the N-terminus, the 458-residue chain is Histidine--tRNA ligase (458 aa).

Belongs to the class-II aminoacyl-tRNA synthetase family. In terms of assembly, homodimer.

Its subcellular location is the cytoplasm. The catalysed reaction is tRNA(His) + L-histidine + ATP = L-histidyl-tRNA(His) + AMP + diphosphate + H(+). This is Histidine--tRNA ligase from Micrococcus luteus (strain ATCC 4698 / DSM 20030 / JCM 1464 / CCM 169 / CCUG 5858 / IAM 1056 / NBRC 3333 / NCIMB 9278 / NCTC 2665 / VKM Ac-2230) (Micrococcus lysodeikticus).